Reading from the N-terminus, the 618-residue chain is UvrABC system protein C (618 aa).

In terms of domain architecture, GIY-YIG spans 13–92 (DKPGVYLMKN…IKKYRPKYNI (80 aa)). The 36-residue stretch at 204–239 (LDIVENFKLNMEKAAGNLEFEKAAMLRDKINIIEKI) folds into the UVR domain.

It belongs to the UvrC family. In terms of assembly, interacts with UvrB in an incision complex.

It localises to the cytoplasm. The UvrABC repair system catalyzes the recognition and processing of DNA lesions. UvrC both incises the 5' and 3' sides of the lesion. The N-terminal half is responsible for the 3' incision and the C-terminal half is responsible for the 5' incision. The protein is UvrABC system protein C of Clostridium botulinum (strain 657 / Type Ba4).